The primary structure comprises 359 residues: DNA replication and repair protein RecF (359 aa).

Residue 30–37 participates in ATP binding; sequence GPNGSGKT.

The protein belongs to the RecF family.

The protein localises to the cytoplasm. The RecF protein is involved in DNA metabolism; it is required for DNA replication and normal SOS inducibility. RecF binds preferentially to single-stranded, linear DNA. It also seems to bind ATP. This chain is DNA replication and repair protein RecF, found in Psychromonas ingrahamii (strain DSM 17664 / CCUG 51855 / 37).